The chain runs to 656 residues: Vi polysaccharide export protein VexE (656 aa).

In terms of biological role, may be involved in translocation of the Vi antigen. The chain is Vi polysaccharide export protein VexE (vexE) from Salmonella typhi.